The chain runs to 160 residues: Transcription elongation factor GreA (160 aa).

Positions 1–72 (MAEKTYPMTL…QISSLETKIR (72 aa)) form a coiled coil.

Belongs to the GreA/GreB family.

Necessary for efficient RNA polymerase transcription elongation past template-encoded arresting sites. The arresting sites in DNA have the property of trapping a certain fraction of elongating RNA polymerases that pass through, resulting in locked ternary complexes. Cleavage of the nascent transcript by cleavage factors such as GreA or GreB allows the resumption of elongation from the new 3'terminus. GreA releases sequences of 2 to 3 nucleotides. In Streptococcus pneumoniae serotype 4 (strain ATCC BAA-334 / TIGR4), this protein is Transcription elongation factor GreA.